The primary structure comprises 226 residues: ATP-dependent dethiobiotin synthetase BioD (226 aa).

14–19 (GIGKTF) serves as a coordination point for ATP. A Mg(2+)-binding site is contributed by threonine 18. The active site involves lysine 39. A substrate-binding site is contributed by serine 43. Residues aspartate 56, 117-120 (EGVG), 177-178 (NT), 206-208 (PHI), and asparagine 213 contribute to the ATP site. Residues aspartate 56 and glutamate 117 each contribute to the Mg(2+) site.

Belongs to the dethiobiotin synthetase family. Homodimer. Requires Mg(2+) as cofactor.

It is found in the cytoplasm. The catalysed reaction is (7R,8S)-7,8-diammoniononanoate + CO2 + ATP = (4R,5S)-dethiobiotin + ADP + phosphate + 3 H(+). The protein operates within cofactor biosynthesis; biotin biosynthesis; biotin from 7,8-diaminononanoate: step 1/2. Its function is as follows. Catalyzes a mechanistically unusual reaction, the ATP-dependent insertion of CO2 between the N7 and N8 nitrogen atoms of 7,8-diaminopelargonic acid (DAPA, also called 7,8-diammoniononanoate) to form a ureido ring. This is ATP-dependent dethiobiotin synthetase BioD from Xylella fastidiosa (strain M12).